The chain runs to 322 residues: Ribosomal RNA small subunit methyltransferase H (322 aa).

S-adenosyl-L-methionine-binding positions include 35 to 37 (GGY), Asp-52, Phe-79, Asp-100, and Gln-107. Positions 254–322 (GATPAGSRHL…TAPKKEGRQG (69 aa)) are disordered. Residues 295 to 309 (SRSATLRVARRTAAA) are compositionally biased toward low complexity.

Belongs to the methyltransferase superfamily. RsmH family.

Its subcellular location is the cytoplasm. It carries out the reaction cytidine(1402) in 16S rRNA + S-adenosyl-L-methionine = N(4)-methylcytidine(1402) in 16S rRNA + S-adenosyl-L-homocysteine + H(+). Functionally, specifically methylates the N4 position of cytidine in position 1402 (C1402) of 16S rRNA. The protein is Ribosomal RNA small subunit methyltransferase H of Rhizorhabdus wittichii (strain DSM 6014 / CCUG 31198 / JCM 15750 / NBRC 105917 / EY 4224 / RW1) (Sphingomonas wittichii).